The following is a 223-amino-acid chain: Ribonuclease T (223 aa).

One can recognise an Exonuclease domain in the interval 20–194 (VVIDVETAGF…YDTNQTALLF (175 aa)). Aspartate 23, glutamate 25, histidine 181, and aspartate 186 together coordinate Mg(2+). Residue histidine 181 is the Proton donor/acceptor of the active site.

The protein belongs to the RNase T family. As to quaternary structure, homodimer. It depends on Mg(2+) as a cofactor.

Trims short 3' overhangs of a variety of RNA species, leaving a one or two nucleotide 3' overhang. Responsible for the end-turnover of tRNA: specifically removes the terminal AMP residue from uncharged tRNA (tRNA-C-C-A). Also appears to be involved in tRNA biosynthesis. The sequence is that of Ribonuclease T from Pectobacterium atrosepticum (strain SCRI 1043 / ATCC BAA-672) (Erwinia carotovora subsp. atroseptica).